A 74-amino-acid polypeptide reads, in one-letter code: DNA-directed RNA polymerase subunit omega (74 aa).

It belongs to the RNA polymerase subunit omega family. As to quaternary structure, the RNAP catalytic core consists of 2 alpha, 1 beta, 1 beta' and 1 omega subunit. When a sigma factor is associated with the core the holoenzyme is formed, which can initiate transcription.

The enzyme catalyses RNA(n) + a ribonucleoside 5'-triphosphate = RNA(n+1) + diphosphate. Functionally, promotes RNA polymerase assembly. Latches the N- and C-terminal regions of the beta' subunit thereby facilitating its interaction with the beta and alpha subunits. This chain is DNA-directed RNA polymerase subunit omega, found in Lactobacillus acidophilus (strain ATCC 700396 / NCK56 / N2 / NCFM).